Consider the following 115-residue polypeptide: Holo-[acyl-carrier-protein] synthase (115 aa).

Mg(2+) is bound by residues Asp-6 and Glu-51.

This sequence belongs to the P-Pant transferase superfamily. AcpS family. It depends on Mg(2+) as a cofactor.

The protein localises to the cytoplasm. The enzyme catalyses apo-[ACP] + CoA = holo-[ACP] + adenosine 3',5'-bisphosphate + H(+). In terms of biological role, transfers the 4'-phosphopantetheine moiety from coenzyme A to a Ser of acyl-carrier-protein. This is Holo-[acyl-carrier-protein] synthase from Campylobacter jejuni (strain RM1221).